The sequence spans 2104 residues: Myosin type-2 heavy chain 2 (2104 aa).

One can recognise a Myosin N-terminal SH3-like domain in the interval 35–85 (DERTWIWIPDSKESFVKAWIVEDLGEKYRVKLERDGSERIVDGFDAEKVNP). Residues 89–767 (DMVDDMAALT…VLGSLEDRRN (679 aa)) form the Myosin motor domain. Residue 182–189 (GESGAGKT) participates in ATP binding. The actin-binding stretch occupies residues 646-660 (LSSLMHQLEATQPHF). A coiled-coil region spans residues 829–2104 (LGTTQTDEYL…RSNRSPSVLR (1276 aa)). Disordered stretches follow at residues 1245–1278 (NRSVTQHTLDGNSPHPSFEEKHSGDPLKRIDGNN) and 1398–1426 (MEFTGLKPLSPSKISNLPSSQPGSPSKRS). Residues 1246–1259 (RSVTQHTLDGNSPH) are compositionally biased toward polar residues. The span at 1261–1278 (SFEEKHSGDPLKRIDGNN) shows a compositional bias: basic and acidic residues. The span at 1409–1424 (SKISNLPSSQPGSPSK) shows a compositional bias: polar residues. At Ser1421 the chain carries Phosphoserine.

It belongs to the TRAFAC class myosin-kinesin ATPase superfamily. Myosin family. Binds to cdc4 and rlc1.

Functionally, stabilizes the F-actin cables forming the F-actin ring that surrounds the nucleus during interphase. May work in conjunction with myo2. The sequence is that of Myosin type-2 heavy chain 2 (myo3) from Schizosaccharomyces pombe (strain 972 / ATCC 24843) (Fission yeast).